We begin with the raw amino-acid sequence, 585 residues long: Proline--tRNA ligase (585 aa).

The protein belongs to the class-II aminoacyl-tRNA synthetase family. ProS type 1 subfamily. Homodimer.

The protein localises to the cytoplasm. It carries out the reaction tRNA(Pro) + L-proline + ATP = L-prolyl-tRNA(Pro) + AMP + diphosphate. Its function is as follows. Catalyzes the attachment of proline to tRNA(Pro) in a two-step reaction: proline is first activated by ATP to form Pro-AMP and then transferred to the acceptor end of tRNA(Pro). As ProRS can inadvertently accommodate and process non-cognate amino acids such as alanine and cysteine, to avoid such errors it has two additional distinct editing activities against alanine. One activity is designated as 'pretransfer' editing and involves the tRNA(Pro)-independent hydrolysis of activated Ala-AMP. The other activity is designated 'posttransfer' editing and involves deacylation of mischarged Ala-tRNA(Pro). The misacylated Cys-tRNA(Pro) is not edited by ProRS. This Acidobacterium capsulatum (strain ATCC 51196 / DSM 11244 / BCRC 80197 / JCM 7670 / NBRC 15755 / NCIMB 13165 / 161) protein is Proline--tRNA ligase.